We begin with the raw amino-acid sequence, 434 residues long: Rubisco accumulation factor 1.1, chloroplastic (434 aa).

The N-terminal 51 residues, 1 to 51 (MLSLTATTLSSSIFTQSKTHGFFNTRPVYRKPFTTITSALIPASNRQAPPK), are a transit peptide targeting the chloroplast. The N-terminal alpha-helix stretch occupies residues 65 to 254 (IPPKFRSLDT…KAKKAVLREL (190 aa)). Residues 273–419 (VPVVRLRFGE…GMVVLVVRPP (147 aa)) form a C-terminal beta sheet region.

This sequence belongs to the RAF family. Homodimer.

Its subcellular location is the plastid. The protein resides in the chloroplast. In terms of biological role, required for assembly or stability of RuBisCO. Acts at a postchaperonin step to fold and/or assemble the large subunit (rbcL) into RuBisCO. RAF1 binds first to a rbcL dimer (rbcL(2)), leading to a rbcL(8)-RAF1(4) complex formation. In the next step, RBCS displaces RAF1, thus resulting in holoenzyme formation. The chain is Rubisco accumulation factor 1.1, chloroplastic from Arabidopsis thaliana (Mouse-ear cress).